Reading from the N-terminus, the 152-residue chain is uncharacterized protein (152 aa).

An HTH marR-type domain is found at 3 to 143; that stretch reads EQKLCQAINL…IIEIFTILKS (141 aa). The H-T-H motif DNA-binding region spans 55–78; sequence PGSLAMYQNVHKSAISNRLKKLLE.

This is an uncharacterized protein from Bacillus subtilis (strain 168).